Here is a 381-residue protein sequence, read N- to C-terminus: O-phospho-L-seryl-tRNA:Cys-tRNA synthase (381 aa).

Pyridoxal 5'-phosphate-binding positions include 86-87 (AR), Asn-192, and 215-217 (SGH). The residue at position 218 (Lys-218) is an N6-(pyridoxal phosphate)lysine.

It belongs to the SepCysS family. In terms of assembly, homodimer. Interacts with SepRS. Pyridoxal 5'-phosphate is required as a cofactor.

The enzyme catalyses O-phospho-L-seryl-tRNA(Cys) + hydrogen sulfide + H(+) = L-cysteinyl-tRNA(Cys) + phosphate. In terms of biological role, converts O-phospho-L-seryl-tRNA(Cys) (Sep-tRNA(Cys)) to L-cysteinyl-tRNA(Cys) (Cys-tRNA(Cys)). The protein is O-phospho-L-seryl-tRNA:Cys-tRNA synthase of Methanococcus vannielii (strain ATCC 35089 / DSM 1224 / JCM 13029 / OCM 148 / SB).